Here is a 1194-residue protein sequence, read N- to C-terminus: Immunoglobulin superfamily member 3 (1194 aa).

The N-terminal stretch at 1 to 19 is a signal peptide; the sequence is MKCFFPVLSCLAVLGVVSA. Ig-like C2-type domains are found at residues 20 to 138, 143 to 262, 276 to 386, 401 to 539, 545 to 661, 676 to 803, 813 to 945, and 949 to 1097; these read QRQV…AKMN, PDSL…WYAM, PTDK…KTVT, PIIV…ISIT, FAVT…WTRL, PVTK…EEVS, PDSR…TALT, and PDAS…YRLT. Residues 20-1124 are Extracellular-facing; the sequence is QRQVTVQEGP…LQSIICSNDA (1105 aa). 2 disulfides stabilise this stretch: Cys42-Cys120 and Cys167-Cys246. Asn43 carries N-linked (GlcNAc...) asparagine glycosylation. The EWI motif motif lies at 250 to 252; it reads EWI. Cysteines 302 and 376 form a disulfide. An N-linked (GlcNAc...) asparagine glycan is attached at Asn418. Cystine bridges form between Cys432–Cys511 and Cys566–Cys645. Asn655 carries N-linked (GlcNAc...) asparagine glycosylation. 3 cysteine pairs are disulfide-bonded: Cys701–Cys782, Cys838–Cys918, and Cys974–Cys1080. A glycan (N-linked (GlcNAc...) asparagine) is linked at Asn842. A disordered region spans residues 997 to 1033; that stretch reads AGGKRSSPGLEEQEEEREEEEEEDDDDDDDPTERTAL. Over residues 1007 to 1027 the composition is skewed to acidic residues; that stretch reads EEQEEEREEEEEEDDDDDDDP. Asn1077 carries N-linked (GlcNAc...) asparagine glycosylation. Residues 1125 to 1145 traverse the membrane as a helical segment; sequence LFYFVFFYPFPIFGILIITIL. At 1146–1194 the chain is on the cytoplasmic side; it reads LVRFKSRNSSKNSDGKNGVPLLWIKEPHLNYSPTCLEPPVLSIHPGAID.

In terms of tissue distribution, expressed in a wide range of tissues with High expression in Placenta, kidney and lung.

The protein resides in the membrane. The polypeptide is Immunoglobulin superfamily member 3 (IGSF3) (Homo sapiens (Human)).